We begin with the raw amino-acid sequence, 849 residues long: DNA mismatch repair protein MutS (849 aa).

602 to 609 (GPNMSGKS) serves as a coordination point for ATP.

This sequence belongs to the DNA mismatch repair MutS family.

Functionally, this protein is involved in the repair of mismatches in DNA. It is possible that it carries out the mismatch recognition step. This protein has a weak ATPase activity. This is DNA mismatch repair protein MutS from Streptococcus mutans serotype c (strain ATCC 700610 / UA159).